The primary structure comprises 375 residues: D-alanine--D-alanine ligase (375 aa).

The region spanning 145 to 348 (KRLLRDADLE…YPALITRLIE (204 aa)) is the ATP-grasp domain. 175-230 (ITYLGSSLFVKPANQGSSVGVSKVINRISFDQALALAFCFDDKVLVESAINGRELE) contributes to the ATP binding site. Mg(2+) is bound by residues D302, E315, and N317.

The protein belongs to the D-alanine--D-alanine ligase family. Mg(2+) is required as a cofactor. The cofactor is Mn(2+).

The protein resides in the cytoplasm. The catalysed reaction is 2 D-alanine + ATP = D-alanyl-D-alanine + ADP + phosphate + H(+). It functions in the pathway cell wall biogenesis; peptidoglycan biosynthesis. Its function is as follows. Cell wall formation. In Baumannia cicadellinicola subsp. Homalodisca coagulata, this protein is D-alanine--D-alanine ligase.